We begin with the raw amino-acid sequence, 136 residues long: MSYHINSSQNRFHKIITTEQLNQVIEAITDGRYSWACVLILRFVGYNPLHFIPQRTYSRLMKDNRQVANIPGSLNNGKSISANSPITNSSVVNKASTQDLNQSNNSDYLTTPEPDKRGNIPGYLETKMAVMYSRNQ.

The span at Lys-94–Leu-109 shows a compositional bias: polar residues. Residues Lys-94 to Ile-120 are disordered.

The protein belongs to the HetP family. As to quaternary structure, in bacterial two-hybrid assays interacts robustly with HetR and Alr3234 and weakly with itself, HetP and Asl1930.

In terms of biological role, delays heterocyst differentiation and commitment when nitrogen is limiting. Interplay between the 4 HetP paralogs controls the timing of commitment to heterocyst formation and its duration. Epistatic analysis show that the 3 paralogs act upstream of hetP to delay commitment (asl1930, alr3234) or inhibit development (alr2902). Asl1930 and Alr3234 must also attenuate the activity of Alr2902. When only this homolog is present no heterocysts are formed, showing it inhibits development. Ectopic expression partially complements a hetP deletion. The protein is HetP-like commitment protein Alr2902 of Nostoc sp. (strain PCC 7120 / SAG 25.82 / UTEX 2576).